A 395-amino-acid polypeptide reads, in one-letter code: Acetylornithine aminotransferase (395 aa).

Residues 117-118 and phenylalanine 144 contribute to the pyridoxal 5'-phosphate site; that span reads GA. Residue arginine 147 coordinates N(2)-acetyl-L-ornithine. Position 230 to 233 (230 to 233) interacts with pyridoxal 5'-phosphate; that stretch reads DEVQ. N6-(pyridoxal phosphate)lysine is present on lysine 259. Residue serine 285 coordinates N(2)-acetyl-L-ornithine. Threonine 286 lines the pyridoxal 5'-phosphate pocket.

This sequence belongs to the class-III pyridoxal-phosphate-dependent aminotransferase family. ArgD subfamily. As to quaternary structure, homodimer. The cofactor is pyridoxal 5'-phosphate.

It localises to the cytoplasm. It carries out the reaction N(2)-acetyl-L-ornithine + 2-oxoglutarate = N-acetyl-L-glutamate 5-semialdehyde + L-glutamate. It functions in the pathway amino-acid biosynthesis; L-arginine biosynthesis; N(2)-acetyl-L-ornithine from L-glutamate: step 4/4. In Methanosarcina acetivorans (strain ATCC 35395 / DSM 2834 / JCM 12185 / C2A), this protein is Acetylornithine aminotransferase.